A 659-amino-acid polypeptide reads, in one-letter code: Beta-galactosidase BgaA (659 aa).

Residue R103 coordinates substrate. C107 is a binding site for Zn(2+). Substrate is bound at residue N141. Catalysis depends on E142, which acts as the Proton donor. 3 residues coordinate Zn(2+): C148, C150, and C153. E298 (nucleophile) is an active-site residue. Residue W307 participates in substrate binding.

This sequence belongs to the glycosyl hydrolase 42 family. Dimer.

The enzyme catalyses Hydrolysis of terminal non-reducing beta-D-galactose residues in beta-D-galactosides.. With respect to regulation, inhibited by Cu(2+), Hg(2+) and Zn(2+). No effect with Ca(2+), Mg(2+), Mn(2+) or excess EDTA (10 mM). In terms of biological role, involved in plant cell wall degradation in cooperation with cellulosome. Hydrolyzes both p-nitrophenyl-alpha-L-arabinopyranoside (pNPAp) and p-nitrophenyl-beta-D-galactopyranoside (pNPGp), with higher activity for pNPAp. Shows hydrolysis activity against p-nitrophenyl-beta-D-fucopyranoside (pNPFp), but not against p-nitrophenyl-alpha-L-arabinofuranoside (pNPAf), o-nitrophenyl-beta-D-galactopyranoside (oNPGp), p-nitrophenyl-beta-D-xylopyranoside (pNPXp), p-nitrophenyl-beta-D-glucopyranoside (pNPGLp), p-nitrophenyl-beta-D-cellobiopyranoside (pNPCp), p-nitrophenyl-beta-lactopyranoside (pNPLp) or p-nitrophenyl-alpha-galactopyranoside (pNPalphaGp). No detectable activity against arabinan or arabinoxylan, but activity against arabinogalactan can be detected. Increases degradation activity of alpha-L-arabinofuranosidase (ArfA) and endo-1,4-beta-xylanase (XynA) when corn fiber gum and corn stem powder are used as substrates. This Clostridium cellulovorans (strain ATCC 35296 / DSM 3052 / OCM 3 / 743B) protein is Beta-galactosidase BgaA (bgaA).